We begin with the raw amino-acid sequence, 161 residues long: Protein-export protein SecB (161 aa).

It belongs to the SecB family. As to quaternary structure, homotetramer, a dimer of dimers. One homotetramer interacts with 1 SecA dimer.

The protein resides in the cytoplasm. Its function is as follows. One of the proteins required for the normal export of preproteins out of the cell cytoplasm. It is a molecular chaperone that binds to a subset of precursor proteins, maintaining them in a translocation-competent state. It also specifically binds to its receptor SecA. In Ectopseudomonas mendocina (strain ymp) (Pseudomonas mendocina), this protein is Protein-export protein SecB.